Here is a 952-residue protein sequence, read N- to C-terminus: Meiotic coiled-coil protein 3 (952 aa).

Coiled coils occupy residues Q283–L611, T684–L716, and S839–E942.

It localises to the cytoplasm. Has a role in meiosis. The polypeptide is Meiotic coiled-coil protein 3 (mcp3) (Schizosaccharomyces pombe (strain 972 / ATCC 24843) (Fission yeast)).